Consider the following 219-residue polypeptide: Transmembrane protein 179B (219 aa).

Transmembrane regions (helical) follow at residues 9–29 (VELL…ATLT), 65–85 (FVAG…FFWV), 98–118 (IGLR…LVSA), and 162–182 (LHTA…ALLL). Serine 206 bears the Phosphoserine mark.

Belongs to the TMEM179 family.

The protein localises to the membrane. The polypeptide is Transmembrane protein 179B (Tmem179b) (Mus musculus (Mouse)).